The primary structure comprises 339 residues: Putative P2Y purinoceptor 10 (339 aa).

The Extracellular segment spans residues 1–39; it reads MANLDKYTETFKMGSNSTSTAEIYCNVTNVKFQYSLYAT. N-linked (GlcNAc...) asparagine glycans are attached at residues Asn16 and Asn26. A helical membrane pass occupies residues 40-60; that stretch reads TYILIFIPGLLANSAALWVLC. Residues 61 to 68 lie on the Cytoplasmic side of the membrane; the sequence is RFISKKNK. Residues 69-89 traverse the membrane as a helical segment; sequence AIIFMINLSVADLAHVLSLPL. Residues 90–103 lie on the Extracellular side of the membrane; it reads RIYYYISHHWPFQR. A helical membrane pass occupies residues 104–124; that stretch reads ALCLLCFYLKYLNMYASICFL. Cys106 and Cys181 are joined by a disulfide. At 125-149 the chain is on the cytoplasmic side; that stretch reads TCISLQRCFFLLKPFRARDWKRRYD. Residues 150-170 form a helical membrane-spanning segment; the sequence is VGISAAIWIVVGTACLPFPIL. At 171-193 the chain is on the extracellular side; that stretch reads RSTDLNNNKSCFADLGYKQMNAV. Residue Asn178 is glycosylated (N-linked (GlcNAc...) asparagine). Residues 194–214 traverse the membrane as a helical segment; sequence ALVGMITVAELAGFVIPVIII. At 215–244 the chain is on the cytoplasmic side; the sequence is AWCTWKTTISLRQPPMAFQGISERQKALRM. The helical transmembrane segment at 245 to 265 threads the bilayer; that stretch reads VFMCAAVFFICFTPYHINFIF. The Extracellular segment spans residues 266-288; that stretch reads YTMVKETIISSCPVVRIALYFHP. The chain crosses the membrane as a helical span at residues 289-309; sequence FCLCLASLCCLLDPILYYFMA. The Cytoplasmic portion of the chain corresponds to 310-339; it reads SEFRDQLSRHGSSVTRSRLMSKESGSSMIG.

Belongs to the G-protein coupled receptor 1 family. Weakly expressed in blood leukocytes.

It is found in the cell membrane. Its function is as follows. Putative receptor for purines coupled to G-proteins. The protein is Putative P2Y purinoceptor 10 (P2RY10) of Homo sapiens (Human).